Here is a 388-residue protein sequence, read N- to C-terminus: Nitric oxide reductase FlRd-NAD(+) reductase (388 aa).

Belongs to the FAD-dependent oxidoreductase family. It depends on FAD as a cofactor.

The protein localises to the cytoplasm. The catalysed reaction is 2 reduced [nitric oxide reductase rubredoxin domain] + NAD(+) + H(+) = 2 oxidized [nitric oxide reductase rubredoxin domain] + NADH. It functions in the pathway nitrogen metabolism; nitric oxide reduction. Its function is as follows. One of at least two accessory proteins for anaerobic nitric oxide (NO) reductase. Reduces the rubredoxin moiety of NO reductase. In Aeromonas hydrophila subsp. hydrophila (strain ATCC 7966 / DSM 30187 / BCRC 13018 / CCUG 14551 / JCM 1027 / KCTC 2358 / NCIMB 9240 / NCTC 8049), this protein is Nitric oxide reductase FlRd-NAD(+) reductase.